The following is a 498-amino-acid chain: ATP synthase subunit beta, chloroplastic (498 aa).

Position 172–179 (172–179 (GGAGVGKT)) interacts with ATP.

This sequence belongs to the ATPase alpha/beta chains family. F-type ATPases have 2 components, CF(1) - the catalytic core - and CF(0) - the membrane proton channel. CF(1) has five subunits: alpha(3), beta(3), gamma(1), delta(1), epsilon(1). CF(0) has four main subunits: a(1), b(1), b'(1) and c(9-12).

The protein resides in the plastid. It localises to the chloroplast thylakoid membrane. It carries out the reaction ATP + H2O + 4 H(+)(in) = ADP + phosphate + 5 H(+)(out). In terms of biological role, produces ATP from ADP in the presence of a proton gradient across the membrane. The catalytic sites are hosted primarily by the beta subunits. This is ATP synthase subunit beta, chloroplastic from Populus tremuloides (Quaking aspen).